The following is a 504-amino-acid chain: Kinesin light chain 3 (504 aa).

A coiled-coil region spans residues 90-150 (ALSAHVGALE…EEEKRHLEFL (61 aa)). Residues 153 to 197 (LRQYDPPAESQQSESPPRRDSLASLFPSEEEERKGPEAAGAAAAQ) form a disordered region. Low complexity predominate over residues 158–167 (PPAESQQSES). Residue Ser-173 is modified to Phosphoserine. 5 TPR repeats span residues 207-240 (LRTL…LERS), 249-282 (ATML…REQT), 291-324 (AATL…REKV), 333-366 (AKQL…YEAL), and 375-408 (AKTK…EDLP). The segment at 411–438 (LGAPNTGTAGDAEQALRRSSSLSKIRES) is disordered. Ser-466 bears the Phosphoserine mark. The interval 472 to 504 (VDAPRAPGTQFPSWHLDKAPRTLSASTQDLSPH) is disordered. Over residues 494 to 504 (LSASTQDLSPH) the composition is skewed to polar residues. The residue at position 498 (Thr-498) is a Phosphothreonine. Ser-502 carries the post-translational modification Phosphoserine.

The protein belongs to the kinesin light chain family. As to quaternary structure, oligomer composed of two heavy chains and two light chains. Associates with microtubulin in an ATP-dependent manner. Interacts with KIF5C. Interacts with ODF1. Interacts with LRGUK. Interacts with VDAC2.

The protein localises to the cytoplasm. Its subcellular location is the cytoskeleton. It is found in the mitochondrion. In terms of biological role, kinesin is a microtubule-associated force-producing protein that may play a role in organelle transport. Plays a role during spermiogenesis in the development of the sperm tail midpiece and in the normal function of spermatozoa. May play a role in the formation of the mitochondrial sheath formation in the developing spermatid midpiece. The protein is Kinesin light chain 3 (KLC3) of Homo sapiens (Human).